A 428-amino-acid chain; its full sequence is Serine--tRNA ligase (428 aa).

235-237 (TAE) serves as a coordination point for L-serine. Residue 266 to 268 (RSE) participates in ATP binding. Residue glutamate 289 coordinates L-serine. 353-356 (EISS) contributes to the ATP binding site. Serine 389 contacts L-serine.

Belongs to the class-II aminoacyl-tRNA synthetase family. Type-1 seryl-tRNA synthetase subfamily. As to quaternary structure, homodimer. The tRNA molecule binds across the dimer.

The protein localises to the cytoplasm. The enzyme catalyses tRNA(Ser) + L-serine + ATP = L-seryl-tRNA(Ser) + AMP + diphosphate + H(+). It carries out the reaction tRNA(Sec) + L-serine + ATP = L-seryl-tRNA(Sec) + AMP + diphosphate + H(+). It functions in the pathway aminoacyl-tRNA biosynthesis; selenocysteinyl-tRNA(Sec) biosynthesis; L-seryl-tRNA(Sec) from L-serine and tRNA(Sec): step 1/1. In terms of biological role, catalyzes the attachment of serine to tRNA(Ser). Is also able to aminoacylate tRNA(Sec) with serine, to form the misacylated tRNA L-seryl-tRNA(Sec), which will be further converted into selenocysteinyl-tRNA(Sec). The chain is Serine--tRNA ligase from Shewanella denitrificans (strain OS217 / ATCC BAA-1090 / DSM 15013).